Here is a 295-residue protein sequence, read N- to C-terminus: Ribosomal RNA small subunit methyltransferase A (295 aa).

Residues Asn-29, Leu-31, Gly-56, Glu-77, Asp-102, and Asn-128 each contribute to the S-adenosyl-L-methionine site.

It belongs to the class I-like SAM-binding methyltransferase superfamily. rRNA adenine N(6)-methyltransferase family. RsmA subfamily.

It localises to the cytoplasm. It catalyses the reaction adenosine(1518)/adenosine(1519) in 16S rRNA + 4 S-adenosyl-L-methionine = N(6)-dimethyladenosine(1518)/N(6)-dimethyladenosine(1519) in 16S rRNA + 4 S-adenosyl-L-homocysteine + 4 H(+). Functionally, specifically dimethylates two adjacent adenosines (A1518 and A1519) in the loop of a conserved hairpin near the 3'-end of 16S rRNA in the 30S particle. May play a critical role in biogenesis of 30S subunits. The sequence is that of Ribosomal RNA small subunit methyltransferase A from Listeria innocua serovar 6a (strain ATCC BAA-680 / CLIP 11262).